The chain runs to 395 residues: Elongation factor Tu (395 aa).

The tr-type G domain occupies 10–204; sequence KEHANIGTIG…AVDDFIPTPE (195 aa). A G1 region spans residues 19-26; it reads GHVDHGKT. Residue 19 to 26 participates in GTP binding; it reads GHVDHGKT. Thr-26 is a Mg(2+) binding site. Residues 60–64 form a G2 region; it reads GITIN. Residues 81–84 are G3; that stretch reads DCPG. GTP contacts are provided by residues 81-85 and 136-139; these read DCPGH and NKVD. The tract at residues 136 to 139 is G4; it reads NKVD. The segment at 174–176 is G5; that stretch reads SAL.

The protein belongs to the TRAFAC class translation factor GTPase superfamily. Classic translation factor GTPase family. EF-Tu/EF-1A subfamily. Monomer.

Its subcellular location is the cytoplasm. It catalyses the reaction GTP + H2O = GDP + phosphate + H(+). Functionally, GTP hydrolase that promotes the GTP-dependent binding of aminoacyl-tRNA to the A-site of ribosomes during protein biosynthesis. The sequence is that of Elongation factor Tu from Staphylococcus saprophyticus subsp. saprophyticus (strain ATCC 15305 / DSM 20229 / NCIMB 8711 / NCTC 7292 / S-41).